A 361-amino-acid polypeptide reads, in one-letter code: tRNA 2-selenouridine synthase (361 aa).

The region spanning 11 to 134 (LIADTPLIDV…LRQTAIQATW (124 aa)) is the Rhodanese domain. Cys-94 serves as the catalytic S-selanylcysteine intermediate.

Belongs to the SelU family. In terms of assembly, monomer.

It carries out the reaction 5-methylaminomethyl-2-thiouridine(34) in tRNA + selenophosphate + (2E)-geranyl diphosphate + H2O + H(+) = 5-methylaminomethyl-2-selenouridine(34) in tRNA + (2E)-thiogeraniol + phosphate + diphosphate. The catalysed reaction is 5-methylaminomethyl-2-thiouridine(34) in tRNA + (2E)-geranyl diphosphate = 5-methylaminomethyl-S-(2E)-geranyl-thiouridine(34) in tRNA + diphosphate. The enzyme catalyses 5-methylaminomethyl-S-(2E)-geranyl-thiouridine(34) in tRNA + selenophosphate + H(+) = 5-methylaminomethyl-2-(Se-phospho)selenouridine(34) in tRNA + (2E)-thiogeraniol. It catalyses the reaction 5-methylaminomethyl-2-(Se-phospho)selenouridine(34) in tRNA + H2O = 5-methylaminomethyl-2-selenouridine(34) in tRNA + phosphate. Involved in the post-transcriptional modification of the uridine at the wobble position (U34) of tRNA(Lys), tRNA(Glu) and tRNA(Gln). Catalyzes the conversion of 2-thiouridine (S2U-RNA) to 2-selenouridine (Se2U-RNA). Acts in a two-step process involving geranylation of 2-thiouridine (S2U) to S-geranyl-2-thiouridine (geS2U) and subsequent selenation of the latter derivative to 2-selenouridine (Se2U) in the tRNA chain. This Salmonella arizonae (strain ATCC BAA-731 / CDC346-86 / RSK2980) protein is tRNA 2-selenouridine synthase.